The chain runs to 277 residues: Proteasome assembly chaperone 1 (277 aa).

The protein belongs to the PSMG1 family. As to quaternary structure, forms a heterodimer with psmg2. In terms of processing, degraded by the proteasome upon completion of 20S proteasome maturation.

The protein resides in the cytoplasm. Its subcellular location is the endoplasmic reticulum. In terms of biological role, chaperone protein which promotes assembly of the 20S proteasome as part of a heterodimer with psmg2. This chain is Proteasome assembly chaperone 1, found in Danio rerio (Zebrafish).